Here is a 337-residue protein sequence, read N- to C-terminus: Retrovirus-related Pol polyprotein from type-1 retrotransposable element R1 (337 aa).

The 118-residue stretch at 1–118 (GCPQGSISGP…KSARYLGVCM (118 aa)) folds into the Reverse transcriptase domain. The nucleic acid-binding endonuclease stretch occupies residues 253–337 (KRARSCKLMK…ACPCGAPRED (85 aa)).

It catalyses the reaction DNA(n) + a 2'-deoxyribonucleoside 5'-triphosphate = DNA(n+1) + diphosphate. In Nasonia vitripennis (Parasitic wasp), this protein is Retrovirus-related Pol polyprotein from type-1 retrotransposable element R1.